The chain runs to 506 residues: Trans-cinnamate 4-monooxygenase (506 aa).

The helical transmembrane segment at 3–23 threads the bilayer; the sequence is DFVLLEKALLGLFIATIVAIT. Residues 214 to 219 and alanine 307 each bind (E)-cinnamate; that span reads RSRLAQ. Cysteine 448 lines the heme pocket.

Belongs to the cytochrome P450 family. It depends on heme as a cofactor.

It is found in the membrane. The catalysed reaction is (E)-cinnamate + reduced [NADPH--hemoprotein reductase] + O2 = (E)-4-coumarate + oxidized [NADPH--hemoprotein reductase] + H2O + H(+). It participates in phenylpropanoid metabolism; trans-4-coumarate biosynthesis; trans-4-coumarate from trans-cinnamate: step 1/1. Catalyzes the first oxidative step of the phenylpropanoid pathway in higher plants by transforming trans-cinnamate into p-coumarate. The compounds formed by this pathway are essential components for lignification, pollination, and defense against ultraviolet light, predators and pathogens. The protein is Trans-cinnamate 4-monooxygenase (CYP73A10) of Petroselinum crispum (Parsley).